Here is a 524-residue protein sequence, read N- to C-terminus: GMP synthase [glutamine-hydrolyzing] (524 aa).

The Glutamine amidotransferase type-1 domain maps to 9 to 207 (RILILDFGSQ…VIHICQCIPN (199 aa)). Catalysis depends on Cys-86, which acts as the Nucleophile. Residues His-181 and Glu-183 contribute to the active site. The 192-residue stretch at 208 to 399 (WTTKHIIEDS…LGLPADLIYR (192 aa)) folds into the GMPS ATP-PPase domain. 235–241 (SGGVDSA) lines the ATP pocket.

Homodimer.

The catalysed reaction is XMP + L-glutamine + ATP + H2O = GMP + L-glutamate + AMP + diphosphate + 2 H(+). Its pathway is purine metabolism; GMP biosynthesis; GMP from XMP (L-Gln route): step 1/1. Functionally, catalyzes the synthesis of GMP from XMP. This Coxiella burnetii (strain CbuK_Q154) (Coxiella burnetii (strain Q154)) protein is GMP synthase [glutamine-hydrolyzing].